The primary structure comprises 406 residues: Argininosuccinate synthase (406 aa).

ATP-binding positions include alanine 12–serine 20 and alanine 39. L-citrulline contacts are provided by tyrosine 90 and serine 95. Residue glycine 120 coordinates ATP. Threonine 122, asparagine 126, and aspartate 127 together coordinate L-aspartate. Asparagine 126 contacts L-citrulline. Residues arginine 130, serine 179, serine 188, glutamate 264, and tyrosine 276 each contribute to the L-citrulline site.

This sequence belongs to the argininosuccinate synthase family. Type 1 subfamily. In terms of assembly, homotetramer.

It localises to the cytoplasm. The enzyme catalyses L-citrulline + L-aspartate + ATP = 2-(N(omega)-L-arginino)succinate + AMP + diphosphate + H(+). It participates in amino-acid biosynthesis; L-arginine biosynthesis; L-arginine from L-ornithine and carbamoyl phosphate: step 2/3. The sequence is that of Argininosuccinate synthase from Geotalea uraniireducens (strain Rf4) (Geobacter uraniireducens).